A 387-amino-acid chain; its full sequence is Chaperone protein DnaJ (387 aa).

In terms of domain architecture, J spans 6–71; the sequence is DYYEILGVPR…EKRRKYDQFG (66 aa). The CR-type zinc finger occupies 146 to 228; that stretch reads GCEKEIPIYR…CGGTGTVRRQ (83 aa). 8 residues coordinate Zn(2+): Cys159, Cys162, Cys176, Cys179, Cys202, Cys205, Cys216, and Cys219. 4 CXXCXGXG motif repeats span residues 159–166, 176–183, 202–209, and 216–223; these read CSVCGGSG, CQKCGGTG, CDACGGVG, and CRECGGTG.

Belongs to the DnaJ family. Homodimer. Zn(2+) is required as a cofactor.

The protein resides in the cytoplasm. Functionally, participates actively in the response to hyperosmotic and heat shock by preventing the aggregation of stress-denatured proteins and by disaggregating proteins, also in an autonomous, DnaK-independent fashion. Unfolded proteins bind initially to DnaJ; upon interaction with the DnaJ-bound protein, DnaK hydrolyzes its bound ATP, resulting in the formation of a stable complex. GrpE releases ADP from DnaK; ATP binding to DnaK triggers the release of the substrate protein, thus completing the reaction cycle. Several rounds of ATP-dependent interactions between DnaJ, DnaK and GrpE are required for fully efficient folding. Also involved, together with DnaK and GrpE, in the DNA replication of plasmids through activation of initiation proteins. The sequence is that of Chaperone protein DnaJ from Caldicellulosiruptor saccharolyticus (strain ATCC 43494 / DSM 8903 / Tp8T 6331).